Consider the following 115-residue polypeptide: Histidine decarboxylase proenzyme (115 aa).

Ser-83 bears the Pyruvic acid (Ser) mark.

In terms of assembly, the proenzyme is a hexamer of identical pi chains; each pi chain monomer is cleaved to form a small (or beta) chain and a large (or alpha) chain by non-hydrolytic self-catalysis. The cofactor is pyruvate.

The enzyme catalyses L-histidine + H(+) = histamine + CO2. In Lentilactobacillus buchneri (Lactobacillus buchneri), this protein is Histidine decarboxylase proenzyme.